Reading from the N-terminus, the 742-residue chain is Polyphosphate kinase (742 aa).

Asparagine 91 provides a ligand contact to ATP. Mg(2+)-binding residues include arginine 431 and arginine 461. The active-site Phosphohistidine intermediate is histidine 491. ATP-binding residues include tyrosine 524, arginine 624, and histidine 652. The tract at residues tryptophan 718–proline 742 is disordered. Over residues histidine 726–proline 742 the composition is skewed to basic and acidic residues.

Belongs to the polyphosphate kinase 1 (PPK1) family. It depends on Mg(2+) as a cofactor. An intermediate of this reaction is the autophosphorylated ppk in which a phosphate is covalently linked to a histidine residue through a N-P bond.

The enzyme catalyses [phosphate](n) + ATP = [phosphate](n+1) + ADP. Catalyzes the reversible transfer of the terminal phosphate of ATP to form a long-chain polyphosphate (polyP). This Mycobacterium bovis (strain ATCC BAA-935 / AF2122/97) protein is Polyphosphate kinase.